The primary structure comprises 101 residues: Chaperone modulatory protein CbpM (101 aa).

The protein belongs to the CbpM family.

Functionally, interacts with CbpA and inhibits both the DnaJ-like co-chaperone activity and the DNA binding activity of CbpA. Together with CbpA, modulates the activity of the DnaK chaperone system. Does not inhibit the co-chaperone activity of DnaJ. This is Chaperone modulatory protein CbpM from Salmonella agona (strain SL483).